The sequence spans 260 residues: UPF0246 protein Bphyt_1375 (260 aa).

It belongs to the UPF0246 family.

This is UPF0246 protein Bphyt_1375 from Paraburkholderia phytofirmans (strain DSM 17436 / LMG 22146 / PsJN) (Burkholderia phytofirmans).